The sequence spans 627 residues: Siderophore iron transporter ARN1 (627 aa).

Topologically, residues 1 to 70 (MESVHSRDPV…TEIIGSAYNK (70 aa)) are extracellular. The helical transmembrane segment at 71 to 91 (WYLQAILLLSAFICGYGYGLD) threads the bilayer. Over 92–110 (GNIRYIYTGYATSSYSEHS) the chain is Cytoplasmic. The chain crosses the membrane as a helical span at residues 111-131 (LLSTINVINAVVSAASQIIYA). The Extracellular portion of the chain corresponds to 132–135 (RLSD). Residues 136 to 156 (VFGRLYLFISAVILYVVGTII) traverse the membrane as a helical segment. The Cytoplasmic portion of the chain corresponds to 157–167 (QSQAYDVQRYA). A helical membrane pass occupies residues 168–188 (AGAIFYNAGYVGVILILLIIL). Residues 189-197 (SDFSSLKWR) lie on the Extracellular side of the membrane. Residues 198–218 (LLYQFVPTWPFIINTWIAGNI) traverse the membrane as a helical segment. Topologically, residues 219–231 (TSRANPVVNWSWD) are cytoplasmic. A helical transmembrane segment spans residues 232–252 (VGMWAFIFPLSCVPIVLCMLH). The Extracellular segment spans residues 253-290 (MQWRARKTPEWHALKGQKSYYQEHGFIKILKQLFWMLD). A helical transmembrane segment spans residues 291 to 311 (VVGVLLMGCSLGCILVPLTLA). The Cytoplasmic segment spans residues 312–323 (GGVKTTWNDSRL). The helical transmembrane segment at 324–344 (IGPFVLGFVLIPILWIWEYRF) threads the bilayer. Over 345–367 (ARDPILPYRLVKDRAVWSSMGIS) the chain is Extracellular. A helical membrane pass occupies residues 368–388 (FLIDFIYYMAADYLYTVMIVA). Residues 389 to 398 (VNESVKSATR) lie on the Cytoplasmic side of the membrane. Residues 399 to 419 (IATLSSFVSTVASPFFALLVT) form a helical membrane-spanning segment. The Extracellular segment spans residues 420–424 (RCTRL). Residues 425–445 (KPFIMFGCALWMVAMGLLYHF) form a helical membrane-spanning segment. Residues 446-454 (RGGSQSHSG) lie on the Cytoplasmic side of the membrane. The chain crosses the membrane as a helical span at residues 455 to 475 (IIGALCVWGVGTTLFTYPVTV). Over 476–563 (SVQSAVSHEN…LMNAYKYVQR (88 aa)) the chain is Extracellular. A helical transmembrane segment spans residues 564–584 (LETIVALVFCVPLIAFSLCLR). Topologically, residues 585 to 627 (DPKLTDTVAVEYIEDGEYVDTKDNDPILDWFEKLPSKFTFKRE) are cytoplasmic.

Belongs to the major facilitator superfamily.

Its subcellular location is the cell membrane. It is found in the endosome membrane. Functionally, involved in the transport of siderophore ferrichrome and so has a role in iron homeostasis. The polypeptide is Siderophore iron transporter ARN1 (ARN1) (Saccharomyces cerevisiae (strain ATCC 204508 / S288c) (Baker's yeast)).